A 320-amino-acid chain; its full sequence is MIKKIGVLTSGGDAPGMNAAIRGVVRAALTEGLEVFGVYDGYLGLYEDRMIQLDRYSVSDMINRGGTFLGSARFPEFREEHIRAVAIENMKKRGIDALVVIGGDGSYMGAKRLTEMGFPCIGLPGTIDNDVAGTDYTIGYFTALHTVVEAIDRLRDTSSSHQRISIVEVMGRYCGDLTLAAAIAGGCEFIVLPEVEFNREDLVAEIKAGIAKGKKHAIVAITEHICDIDELAKYIETETKRETRATVLGHIQRGGSPVPYDRILASRMGAYAIELLLQGHGGRCVGIQNEKMVHHDIIDAIENMKRPFKGDWLECAKKLY.

Glycine 12 contributes to the ATP binding site. Residues 22-26 and 55-60 contribute to the ADP site; these read RGVVR and RYSVSD. Residues 73–74 and 103–106 contribute to the ATP site; these read RF and GDGS. Aspartate 104 contributes to the Mg(2+) binding site. 126-128 is a substrate binding site; that stretch reads TID. Aspartate 128 functions as the Proton acceptor in the catalytic mechanism. Residue arginine 155 participates in ADP binding. Substrate is bound by residues arginine 163 and 170 to 172; that span reads MGR. ADP-binding positions include 186-188, lysine 212, and 214-216; these read GCE and KKH. Substrate contacts are provided by residues glutamate 223, arginine 244, and 250–253; that span reads HIQR.

It belongs to the phosphofructokinase type A (PFKA) family. ATP-dependent PFK group I subfamily. Prokaryotic clade 'B1' sub-subfamily. Homotetramer. The cofactor is Mg(2+).

Its subcellular location is the cytoplasm. The catalysed reaction is beta-D-fructose 6-phosphate + ATP = beta-D-fructose 1,6-bisphosphate + ADP + H(+). It participates in carbohydrate degradation; glycolysis; D-glyceraldehyde 3-phosphate and glycerone phosphate from D-glucose: step 3/4. With respect to regulation, allosterically activated by ADP and other diphosphonucleosides, and allosterically inhibited by phosphoenolpyruvate. Its function is as follows. Catalyzes the phosphorylation of D-fructose 6-phosphate to fructose 1,6-bisphosphate by ATP, the first committing step of glycolysis. In Cronobacter sakazakii (strain ATCC BAA-894) (Enterobacter sakazakii), this protein is ATP-dependent 6-phosphofructokinase.